Here is a 477-residue protein sequence, read N- to C-terminus: Ribulose bisphosphate carboxylase large chain (477 aa).

Residues 1–2 (MS) constitute a propeptide that is removed on maturation. Pro3 is subject to N-acetylproline. An N6,N6,N6-trimethyllysine modification is found at Lys14. Substrate is bound by residues Asn123 and Thr173. Lys175 serves as the catalytic Proton acceptor. A substrate-binding site is contributed by Lys177. Mg(2+) contacts are provided by Lys201, Asp203, and Glu204. An N6-carboxylysine modification is found at Lys201. His294 (proton acceptor) is an active-site residue. 3 residues coordinate substrate: Arg295, His327, and Ser379.

It belongs to the RuBisCO large chain family. Type I subfamily. As to quaternary structure, heterohexadecamer of 8 large chains and 8 small chains; disulfide-linked. The disulfide link is formed within the large subunit homodimers. Requires Mg(2+) as cofactor. In terms of processing, the disulfide bond which can form in the large chain dimeric partners within the hexadecamer appears to be associated with oxidative stress and protein turnover.

The protein resides in the plastid. It is found in the chloroplast. It carries out the reaction 2 (2R)-3-phosphoglycerate + 2 H(+) = D-ribulose 1,5-bisphosphate + CO2 + H2O. It catalyses the reaction D-ribulose 1,5-bisphosphate + O2 = 2-phosphoglycolate + (2R)-3-phosphoglycerate + 2 H(+). In terms of biological role, ruBisCO catalyzes two reactions: the carboxylation of D-ribulose 1,5-bisphosphate, the primary event in carbon dioxide fixation, as well as the oxidative fragmentation of the pentose substrate in the photorespiration process. Both reactions occur simultaneously and in competition at the same active site. The polypeptide is Ribulose bisphosphate carboxylase large chain (Dioscorea elephantipes (Elephant's foot yam)).